The sequence spans 229 residues: Uridylate kinase (229 aa).

Residue 11 to 12 coordinates ATP; sequence GS. Gly45 contributes to the UMP binding site. Positions 46 and 50 each coordinate ATP. UMP contacts are provided by residues Asp67 and 114–120; that span reads TEPGHTT. ATP-binding residues include Thr140, Tyr146, and Asp149.

Belongs to the UMP kinase family. Homohexamer.

It localises to the cytoplasm. The catalysed reaction is UMP + ATP = UDP + ADP. The protein operates within pyrimidine metabolism; CTP biosynthesis via de novo pathway; UDP from UMP (UMPK route): step 1/1. Inhibited by UTP. Its function is as follows. Catalyzes the reversible phosphorylation of UMP to UDP. The protein is Uridylate kinase of Thermoplasma acidophilum (strain ATCC 25905 / DSM 1728 / JCM 9062 / NBRC 15155 / AMRC-C165).